The sequence spans 106 residues: MTTEKIAFRMFLNPGCEAEYQLRHDRIWPELVALLKNSGVSDYSIFLDEPRGVLFAVLSRSPGHTMQTLPQHPVMQRWWQHMKDIMRCNPDGSPVAEPLPCLFHLD.

Position 20 (Tyr20) interacts with substrate. The active-site Proton donor is His24. Substrate is bound by residues Tyr43 and Trp78–Trp79.

Belongs to the rhamnose mutarotase family. As to quaternary structure, homodimer.

The protein resides in the cytoplasm. It carries out the reaction alpha-L-rhamnose = beta-L-rhamnose. It functions in the pathway carbohydrate metabolism; L-rhamnose metabolism. In terms of biological role, involved in the anomeric conversion of L-rhamnose. This chain is L-rhamnose mutarotase, found in Leptothrix cholodnii (strain ATCC 51168 / LMG 8142 / SP-6) (Leptothrix discophora (strain SP-6)).